Consider the following 501-residue polypeptide: Envelope glycoprotein C homolog (501 aa).

An N-terminal signal peptide occupies residues 1–27 (MLTPRVLRALGWTGLFFLLLSPSNVLG). The Virion surface portion of the chain corresponds to 28 to 465 (ASLSRDLETP…DATPAARGTP (438 aa)). N46 carries N-linked (GlcNAc...) asparagine; by host glycosylation. The segment at 53-86 (PLTEVPHAPSTESVSTNSESTNEHTITETTGKNA) is disordered. Residues 62 to 72 (STESVSTNSES) are compositionally biased toward low complexity. Residues N91, N100, N120, N212, N354, N400, and N429 are each glycosylated (N-linked (GlcNAc...) asparagine; by host). The 99-residue stretch at 258–356 (PASVDVLAPP…GDMISTTNAT (99 aa)) folds into the Ig-like domain. Residues 466-492 (MVITVTAVLGLAVILGMGIIMTALCLY) form a helical membrane-spanning segment. Over 493–501 (NSTRKNIRL) the chain is Cytoplasmic.

This sequence belongs to the herpesviridae glycoprotein C family.

The protein localises to the secreted. It localises to the host cell membrane. May play an immunoevasive role in the pathogenesis of Marek's disease. It is a candidate for causing the early-stage immunosuppression that occurs after MDHV infection. This Gallus gallus (Chicken) protein is Envelope glycoprotein C homolog (gC).